We begin with the raw amino-acid sequence, 229 residues long: E3 ubiquitin-protein ligase RNF114 (229 aa).

Positions methionine 1 to aspartate 23 are disordered. Residues cysteine 30–arginine 69 form an RING-type zinc finger. Cysteine 92 and cysteine 95 together coordinate Zn(2+). The C2HC RNF-type zinc finger occupies cysteine 92 to cysteine 111. At lysine 103 the chain carries N6-acetyllysine. Zn(2+) is bound by residues histidine 107 and cysteine 111. Lysine 113 carries the post-translational modification N6-acetyllysine.

As to quaternary structure, interacts with XAF1, the interaction increases XAF1 stability and proapoptotic effects, and may regulate IFN signaling. Autoubiquitinated. Polyubiquitinated in the presence of E2 enzymes UBE2D1, UBE2D2 and UBE2D3, but only monoubiquitinated in the presence of UBE2E1.

It is found in the cytoplasm. Its subcellular location is the nucleus. It catalyses the reaction S-ubiquitinyl-[E2 ubiquitin-conjugating enzyme]-L-cysteine + [acceptor protein]-L-lysine = [E2 ubiquitin-conjugating enzyme]-L-cysteine + N(6)-ubiquitinyl-[acceptor protein]-L-lysine.. It participates in protein modification; protein ubiquitination. Its function is as follows. E3 ubiquitin-protein ligase that promotes the ubiquitination of various substrates. In turn, participates in the regulation of many biological processes including cell cycle, apoptosis, osteoclastogenesis as well as innate or adaptive immunity. Acts as negative regulator of NF-kappa-B-dependent transcription by promoting the ubiquitination and stabilization of the NF-kappa-B inhibitor TNFAIP3. May promote the ubiquitination of TRAF6 as well. Also acts as a negative regulator of T-cell activation. Inhibits cellular dsRNA responses and interferon production by targeting MAVS component for proteasomal degradation. Ubiquitinates the CDK inhibitor CDKN1A leading to its degradationand probably also CDKN1B and CDKN1C. This activity stimulates cell cycle G1-to-S phase transition and suppresses cellular senescence. May play a role in spermatogenesis. This Mus musculus (Mouse) protein is E3 ubiquitin-protein ligase RNF114 (Rnf114).